A 253-amino-acid chain; its full sequence is Imidazole glycerol phosphate synthase subunit HisF (253 aa).

Active-site residues include aspartate 11 and aspartate 130.

It belongs to the HisA/HisF family. As to quaternary structure, heterodimer of HisH and HisF.

Its subcellular location is the cytoplasm. It catalyses the reaction 5-[(5-phospho-1-deoxy-D-ribulos-1-ylimino)methylamino]-1-(5-phospho-beta-D-ribosyl)imidazole-4-carboxamide + L-glutamine = D-erythro-1-(imidazol-4-yl)glycerol 3-phosphate + 5-amino-1-(5-phospho-beta-D-ribosyl)imidazole-4-carboxamide + L-glutamate + H(+). The protein operates within amino-acid biosynthesis; L-histidine biosynthesis; L-histidine from 5-phospho-alpha-D-ribose 1-diphosphate: step 5/9. In terms of biological role, IGPS catalyzes the conversion of PRFAR and glutamine to IGP, AICAR and glutamate. The HisF subunit catalyzes the cyclization activity that produces IGP and AICAR from PRFAR using the ammonia provided by the HisH subunit. This Cereibacter sphaeroides (strain ATCC 17025 / ATH 2.4.3) (Rhodobacter sphaeroides) protein is Imidazole glycerol phosphate synthase subunit HisF.